A 244-amino-acid chain; its full sequence is NAD(P)H-quinone oxidoreductase subunit K (244 aa).

Residues cysteine 60, cysteine 61, cysteine 125, and cysteine 156 each coordinate [4Fe-4S] cluster.

The protein belongs to the complex I 20 kDa subunit family. As to quaternary structure, NDH-1 can be composed of about 15 different subunits; different subcomplexes with different compositions have been identified which probably have different functions. Requires [4Fe-4S] cluster as cofactor.

The protein localises to the cellular thylakoid membrane. It catalyses the reaction a plastoquinone + NADH + (n+1) H(+)(in) = a plastoquinol + NAD(+) + n H(+)(out). It carries out the reaction a plastoquinone + NADPH + (n+1) H(+)(in) = a plastoquinol + NADP(+) + n H(+)(out). Functionally, NDH-1 shuttles electrons from an unknown electron donor, via FMN and iron-sulfur (Fe-S) centers, to quinones in the respiratory and/or the photosynthetic chain. The immediate electron acceptor for the enzyme in this species is believed to be plastoquinone. Couples the redox reaction to proton translocation, and thus conserves the redox energy in a proton gradient. Cyanobacterial NDH-1 also plays a role in inorganic carbon-concentration. The protein is NAD(P)H-quinone oxidoreductase subunit K of Synechococcus sp. (strain CC9902).